Consider the following 462-residue polypeptide: Glycine--tRNA ligase (462 aa).

The substrate site is built by Arg100 and Glu170. Residues 202-204 (RNE), 212-217 (FRTREF), 287-288 (EL), and 331-334 (GVER) each bind ATP. 217–221 (FEQME) is a binding site for substrate. Residue 327–331 (EPSVG) coordinates substrate.

This sequence belongs to the class-II aminoacyl-tRNA synthetase family. As to quaternary structure, homodimer.

Its subcellular location is the cytoplasm. It catalyses the reaction tRNA(Gly) + glycine + ATP = glycyl-tRNA(Gly) + AMP + diphosphate. In terms of biological role, catalyzes the attachment of glycine to tRNA(Gly). This chain is Glycine--tRNA ligase, found in Malacoplasma penetrans (strain HF-2) (Mycoplasma penetrans).